A 129-amino-acid chain; its full sequence is Protein FYV12 (129 aa).

Residue N91 is glycosylated (N-linked (GlcNAc...) asparagine). The helical transmembrane segment at 109 to 128 (LMTTFLLYVLYVCIYISAFI) threads the bilayer.

It localises to the membrane. Functionally, involved in K1 killer toxin resistance. The protein is Protein FYV12 (FYV12) of Saccharomyces cerevisiae (strain ATCC 204508 / S288c) (Baker's yeast).